The following is a 197-amino-acid chain: Transcription factor FapR (197 aa).

This sequence belongs to the FapR family.

In terms of biological role, transcriptional factor involved in regulation of membrane lipid biosynthesis by repressing genes involved in fatty acid and phospholipid metabolism. This is Transcription factor FapR from Bacillus cereus (strain B4264).